The following is a 328-amino-acid chain: Fructose-1,6-bisphosphatase class 1 (328 aa).

Positions 89, 110, 112, and 113 each coordinate Mg(2+). Substrate-binding positions include Asn-206, Tyr-234, 252-254, and Lys-264; that span reads YLY. Glu-270 serves as a coordination point for Mg(2+).

The protein belongs to the FBPase class 1 family. In terms of assembly, homotetramer. It depends on Mg(2+) as a cofactor.

Its subcellular location is the cytoplasm. It carries out the reaction beta-D-fructose 1,6-bisphosphate + H2O = beta-D-fructose 6-phosphate + phosphate. The protein operates within carbohydrate biosynthesis; gluconeogenesis. The protein is Fructose-1,6-bisphosphatase class 1 of Wigglesworthia glossinidia brevipalpis.